The chain runs to 420 residues: RING finger protein 39 (420 aa).

The RING-type zinc finger occupies Cys88–Gly135. The 211-residue stretch at Asp210–Ser420 folds into the B30.2/SPRY domain. Residues Asp246–Lys265 are disordered.

It is found in the cytoplasm. The enzyme catalyses S-ubiquitinyl-[E2 ubiquitin-conjugating enzyme]-L-cysteine + [acceptor protein]-L-lysine = [E2 ubiquitin-conjugating enzyme]-L-cysteine + N(6)-ubiquitinyl-[acceptor protein]-L-lysine.. It functions in the pathway protein modification; protein ubiquitination. In terms of biological role, plays an inhibitory role in anti-RNA viral innate immunity by targeting the adapter DDX3X and promoting its 'Lys-48'-linked polyubiquitination. Alternatively, enhances the cGAS-STING pathway activation by promoting 'Lys-63'-linked ubiquitination of STING1, facilitating the STING1-TBK1 complex formation and STING1 activation. The sequence is that of RING finger protein 39 (RNF39) from Pan troglodytes (Chimpanzee).